The primary structure comprises 419 residues: Mitochondrial chaperone BCS1 (419 aa).

Topologically, residues 1-15 are mitochondrial intermembrane; the sequence is MPLSDFVLALKDNPY. A helical membrane pass occupies residues 16 to 32; it reads FGAGFGLVGVGTALALA. At 33–419 the chain is on the mitochondrial matrix side; the sequence is RKGAQLGLVA…AIQNAESLRR (387 aa). Residue Tyr-181 is modified to Phosphotyrosine. Residue 230–237 coordinates ATP; that stretch reads GPPGCGKS.

Belongs to the AAA ATPase family. BCS1 subfamily. Interacts with LETM1.

The protein localises to the mitochondrion inner membrane. It carries out the reaction ATP + H2O = ADP + phosphate + H(+). Functionally, chaperone necessary for the incorporation of Rieske iron-sulfur protein UQCRFS1 into the mitochondrial respiratory chain complex III. Plays an important role in the maintenance of mitochondrial tubular networks, respiratory chain assembly and formation of the LETM1 complex. This chain is Mitochondrial chaperone BCS1 (BCS1L), found in Bos taurus (Bovine).